The following is a 433-amino-acid chain: Homogentisate 1,2-dioxygenase (433 aa).

The active-site Proton acceptor is the histidine 288. The Fe cation site is built by histidine 331 and glutamate 337. Positions 346 and 367 each coordinate homogentisate. Residue histidine 367 participates in Fe cation binding.

This sequence belongs to the homogentisate dioxygenase family. Hexamer; dimer of trimers. Requires Fe cation as cofactor.

The enzyme catalyses homogentisate + O2 = 4-maleylacetoacetate + H(+). The protein operates within amino-acid degradation; L-phenylalanine degradation; acetoacetate and fumarate from L-phenylalanine: step 4/6. Functionally, involved in the catabolism of homogentisate (2,5-dihydroxyphenylacetate or 2,5-OH-PhAc), a central intermediate in the degradation of phenylalanine and tyrosine. Catalyzes the oxidative ring cleavage of the aromatic ring of homogentisate to yield maleylacetoacetate. In Pseudomonas putida (strain GB-1), this protein is Homogentisate 1,2-dioxygenase.